A 717-amino-acid chain; its full sequence is Cleavage stimulation factor subunit 3 (717 aa).

The residue at position 2 (S2) is an N-acetylserine. HAT repeat units follow at residues 45 to 77, 79 to 110, 117 to 152, 163 to 196, 221 to 261, 271 to 303, 319 to 352, 354 to 387, and 458 to 494; these read QPID…AEIK, KNYD…YVRE, SYKE…FLKG, QRIT…YEEG, KEYE…WEKS, LITK…YLEQ, LFSD…YEES, MKYE…FARR, and NEDN…FESN. Positions 684 to 705 are disordered; that stretch reads VKRPNEDSDEDEEKGAVVPPVH. Residue S691 is modified to Phosphoserine.

As to quaternary structure, homodimer. The CSTF complex is composed of CSTF1 (50 kDa subunit), CSTF2 (64 kDa subunit) and CSTF3 (77 kDa subunit). CSTF3 directly interacts with CSTF1 and CSTF2. Interacts with FIP1L1.

The protein resides in the nucleus. In terms of biological role, one of the multiple factors required for polyadenylation and 3'-end cleavage of mammalian pre-mRNAs. This chain is Cleavage stimulation factor subunit 3 (CSTF3), found in Homo sapiens (Human).